Reading from the N-terminus, the 35-residue chain is Photosystem II reaction center protein M (35 aa).

A helical transmembrane segment spans residues 5 to 25; it reads ILAFVATALFILIPTAFLLIL.

This sequence belongs to the PsbM family. As to quaternary structure, PSII is composed of 1 copy each of membrane proteins PsbA, PsbB, PsbC, PsbD, PsbE, PsbF, PsbH, PsbI, PsbJ, PsbK, PsbL, PsbM, PsbT, PsbX, PsbY, PsbZ, Psb30/Ycf12, at least 3 peripheral proteins of the oxygen-evolving complex and a large number of cofactors. It forms dimeric complexes.

The protein localises to the plastid. It localises to the chloroplast thylakoid membrane. One of the components of the core complex of photosystem II (PSII). PSII is a light-driven water:plastoquinone oxidoreductase that uses light energy to abstract electrons from H(2)O, generating O(2) and a proton gradient subsequently used for ATP formation. It consists of a core antenna complex that captures photons, and an electron transfer chain that converts photonic excitation into a charge separation. This subunit is found at the monomer-monomer interface. This Adiantum capillus-veneris (Maidenhair fern) protein is Photosystem II reaction center protein M.